The primary structure comprises 1048 residues: Selenate reductase subunit A (1048 aa).

Positions 1-39 form a signal peptide, tat-type signal; that stretch reads MENQHQKFISRRNFIKTSALLGGTAFLGTGLPNIKKTYS. Residues 56–129 form the 4Fe-4S Mo/W bis-MGD-type domain; that stretch reads ENILYSACLQ…AGIQHAYDPY (74 aa). C63, C66, C70, and C115 together coordinate [4Fe-4S] cluster. Mo-bis(molybdopterin guanine dinucleotide) is bound at residue C270.

This sequence belongs to the prokaryotic molybdopterin-containing oxidoreductase family. In terms of assembly, the complex is composed of three subunits: SrdA, SrdB and SrdC. The cofactor is [4Fe-4S] cluster. Requires Mo-bis(molybdopterin guanine dinucleotide) as cofactor. Post-translationally, predicted to be exported by the Tat system. The position of the signal peptide cleavage has not been experimentally proven.

Its subcellular location is the secreted. The catalysed reaction is selenite + a quinone + H2O = selenate + a quinol. In terms of biological role, component of the respiratory selenate reductase complex, which catalyzes the reduction of selenate to selenite. SrdA is probably the catalytic subunit that reduces selenate. The protein is Selenate reductase subunit A of Mesobacillus selenatarsenatis (strain DSM 18680 / JCM 14380 / FERM P-15431 / SF-1).